A 184-amino-acid polypeptide reads, in one-letter code: Peptidyl-tRNA hydrolase (184 aa).

Residue Y17 coordinates tRNA. H22 acts as the Proton acceptor in catalysis. Residues F71, N73, and N119 each coordinate tRNA.

The protein belongs to the PTH family. As to quaternary structure, monomer.

It localises to the cytoplasm. The enzyme catalyses an N-acyl-L-alpha-aminoacyl-tRNA + H2O = an N-acyl-L-amino acid + a tRNA + H(+). Its function is as follows. Hydrolyzes ribosome-free peptidyl-tRNAs (with 1 or more amino acids incorporated), which drop off the ribosome during protein synthesis, or as a result of ribosome stalling. In terms of biological role, catalyzes the release of premature peptidyl moieties from peptidyl-tRNA molecules trapped in stalled 50S ribosomal subunits, and thus maintains levels of free tRNAs and 50S ribosomes. The polypeptide is Peptidyl-tRNA hydrolase (Corynebacterium diphtheriae (strain ATCC 700971 / NCTC 13129 / Biotype gravis)).